A 160-amino-acid chain; its full sequence is Ureidoglycolate lyase (160 aa).

It belongs to the ureidoglycolate lyase family. Homodimer. Requires Ni(2+) as cofactor.

It carries out the reaction (S)-ureidoglycolate = urea + glyoxylate. The protein operates within nitrogen metabolism; (S)-allantoin degradation. In terms of biological role, catalyzes the catabolism of the allantoin degradation intermediate (S)-ureidoglycolate, generating urea and glyoxylate. Involved in the anaerobic utilization of allantoin as sole nitrogen source. Reinforces the induction of genes involved in the degradation of allantoin and glyoxylate by producing glyoxylate. This chain is Ureidoglycolate lyase, found in Escherichia coli O127:H6 (strain E2348/69 / EPEC).